The sequence spans 873 residues: DNA mismatch repair protein MutS (873 aa).

625 to 632 contributes to the ATP binding site; it reads GPNMGGKS.

It belongs to the DNA mismatch repair MutS family.

Its function is as follows. This protein is involved in the repair of mismatches in DNA. It is possible that it carries out the mismatch recognition step. This protein has a weak ATPase activity. The protein is DNA mismatch repair protein MutS of Xanthomonas euvesicatoria pv. vesicatoria (strain 85-10) (Xanthomonas campestris pv. vesicatoria).